The primary structure comprises 119 residues: MNLANYFPVLLFILVGIGVGLVPMFLGKILAPSKPDAEKLSPYECGFEAFEDARMKFDVRYYLIAILFILFDLETAFLFPWGVALRDIGWLGYASMVIFLLEFIVGFVYIWKKGALDWE.

3 helical membrane passes run 7–27 (FPVL…MFLG), 63–83 (LIAI…PWGV), and 88–108 (IGWL…VGFV).

It belongs to the complex I subunit 3 family. In terms of assembly, NDH-1 is composed of 14 different subunits. Subunits NuoA, H, J, K, L, M, N constitute the membrane sector of the complex.

It localises to the cell inner membrane. It catalyses the reaction a quinone + NADH + 5 H(+)(in) = a quinol + NAD(+) + 4 H(+)(out). Functionally, NDH-1 shuttles electrons from NADH, via FMN and iron-sulfur (Fe-S) centers, to quinones in the respiratory chain. The immediate electron acceptor for the enzyme in this species is believed to be ubiquinone. Couples the redox reaction to proton translocation (for every two electrons transferred, four hydrogen ions are translocated across the cytoplasmic membrane), and thus conserves the redox energy in a proton gradient. The protein is NADH-quinone oxidoreductase subunit A of Polynucleobacter necessarius subsp. necessarius (strain STIR1).